The sequence spans 414 residues: Gamma-glutamyl phosphate reductase (414 aa).

Belongs to the gamma-glutamyl phosphate reductase family.

It is found in the cytoplasm. The catalysed reaction is L-glutamate 5-semialdehyde + phosphate + NADP(+) = L-glutamyl 5-phosphate + NADPH + H(+). Its pathway is amino-acid biosynthesis; L-proline biosynthesis; L-glutamate 5-semialdehyde from L-glutamate: step 2/2. In terms of biological role, catalyzes the NADPH-dependent reduction of L-glutamate 5-phosphate into L-glutamate 5-semialdehyde and phosphate. The product spontaneously undergoes cyclization to form 1-pyrroline-5-carboxylate. The sequence is that of Gamma-glutamyl phosphate reductase from Francisella philomiragia subsp. philomiragia (strain ATCC 25017 / CCUG 19701 / FSC 153 / O#319-036).